Reading from the N-terminus, the 631-residue chain is MEPAAGFLSPRPFPRAAVPSAPPAGPGPPANASPRSEPEVLAGPRAPDPPGRLITDPLSGRTYTKGRLLGKGGFARCYEATDTESGIAYAVKVIPQSRVAKPHQREKILNEIELHRDLQHRHIVRFSHHFEDADNIYIFLELCSRKSLAHIWKARHTLLEPEVRYYLRQILSGLKYLHQRGILHRDLKLGNFFITDNMELKVGDFGLAARLEPPEQRKKTICGTPNYVAPEVLLRQGHGPEADVWSLGCVMYTLLCGSPPFETADLKETYRCIKQVHYTLPASLSLPARQLLAAILRASPRDRPSIEQILRHDFFTKGYTPDRLPVSSCVTVPDLTPPNPARSLFAKVTKSLFGRKKNKNKNHSEDQDNVSCLAPVVSGQAPASLIETAAEDSSPRGTLASSGDGFEEGLTVATVVESALCALRNCVAFMPPAEQNPAPLAQPEPLVWVSKWVDYSNKFGFGYQLSSRRVAVLFNDGTHMALSANRKTVHYNPTSTKHFSFSMGSVPRALQPQLGILRYFASYMEQHLMKGGDLPSVEEAEVPAPPLLLQWVKTDQALLMLFSDGTVQVNFYGDHTKLILSGWEPLLVTFVARNRSACTYLASHLRQLGCSPDLRQRLRYALRLLRDQSPA.

Residues 1 to 59 (MEPAAGFLSPRPFPRAAVPSAPPAGPGPPANASPRSEPEVLAGPRAPDPPGRLITDPLS) form a disordered region. Residues 20 to 31 (SAPPAGPGPPAN) are compositionally biased toward pro residues. In terms of domain architecture, Protein kinase spans 63 to 315 (YTKGRLLGKG…IEQILRHDFF (253 aa)). ATP contacts are provided by residues 69 to 77 (LGKGGFARC) and K92. The active-site Proton acceptor is the D186. POLO box domains lie at 448–526 (WVSK…YMEQ) and 547–630 (LLLQ…DQSP).

Belongs to the protein kinase superfamily. Ser/Thr protein kinase family. CDC5/Polo subfamily. In terms of assembly, interacts (via the POLO-box domain) with CIB1; leading to inhibit PLK3 kinase activity. Interacts with GOLGB1. Post-translationally, phosphorylated in an ATM-dependent manner following DNA damage. Phosphorylated as cells enter mitosis and dephosphorylated as cells exit mitosis. In terms of tissue distribution, expressed in skin.

It localises to the cytoplasm. Its subcellular location is the nucleus. The protein localises to the nucleolus. The protein resides in the golgi apparatus. It is found in the cytoskeleton. It localises to the microtubule organizing center. Its subcellular location is the centrosome. The enzyme catalyses L-seryl-[protein] + ATP = O-phospho-L-seryl-[protein] + ADP + H(+). It carries out the reaction L-threonyl-[protein] + ATP = O-phospho-L-threonyl-[protein] + ADP + H(+). Serine/threonine-protein kinase involved in cell cycle regulation, response to stress and Golgi disassembly. Polo-like kinases act by binding and phosphorylating proteins that are already phosphorylated on a specific motif recognized by the POLO box domains. Phosphorylates ATF2, BCL2L1, CDC25A, CDC25C, CHEK2, HIF1A, JUN, p53/TP53, p73/TP73, PTEN, TOP2A and VRK1. Involved in cell cycle regulation: required for entry into S phase and cytokinesis. Phosphorylates BCL2L1, leading to regulate the G2 checkpoint and progression to cytokinesis during mitosis. Plays a key role in response to stress: rapidly activated upon stress stimulation, such as ionizing radiation, reactive oxygen species (ROS), hyperosmotic stress, UV irradiation and hypoxia. Involved in DNA damage response and G1/S transition checkpoint by phosphorylating CDC25A, p53/TP53 and p73/TP73. Phosphorylates p53/TP53 in response to reactive oxygen species (ROS), thereby promoting p53/TP53-mediated apoptosis. Phosphorylates CHEK2 in response to DNA damage, promoting the G2/M transition checkpoint. Phosphorylates the transcription factor p73/TP73 in response to DNA damage, leading to inhibit p73/TP73-mediated transcriptional activation and pro-apoptotic functions. Phosphorylates HIF1A and JUN is response to hypoxia. Phosphorylates ATF2 following hyperosmotic stress in corneal epithelium. Also involved in Golgi disassembly during the cell cycle: part of a MEK1/MAP2K1-dependent pathway that induces Golgi fragmentation during mitosis by mediating phosphorylation of VRK1. May participate in endomitotic cell cycle, a form of mitosis in which both karyokinesis and cytokinesis are interrupted and is a hallmark of megakaryocyte differentiation, via its interaction with CIB1. This chain is Serine/threonine-protein kinase PLK3 (Plk3), found in Mus musculus (Mouse).